The following is a 322-amino-acid chain: NADH-quinone oxidoreductase subunit H (322 aa).

Transmembrane regions (helical) follow at residues 15 to 35, 82 to 102, 114 to 134, 149 to 169, 186 to 206, 243 to 263, 265 to 285, and 302 to 322; these read ILHI…LSIL, IFIL…PTIP, IGIL…LFAG, ASAQ…GVIA, VWNV…GIAL, ISII…YFGF, GSSF…FILI, and WKIC…FILI.

This sequence belongs to the complex I subunit 1 family. As to quaternary structure, NDH-1 is composed of 13 different subunits. Subunits NuoA, H, J, K, L, M, N constitute the membrane sector of the complex.

It is found in the cell membrane. It catalyses the reaction a quinone + NADH + 5 H(+)(in) = a quinol + NAD(+) + 4 H(+)(out). In terms of biological role, NDH-1 shuttles electrons from NADH, via FMN and iron-sulfur (Fe-S) centers, to quinones in the respiratory chain. The immediate electron acceptor for the enzyme in this species is believed to be ubiquinone. Couples the redox reaction to proton translocation (for every two electrons transferred, four hydrogen ions are translocated across the cytoplasmic membrane), and thus conserves the redox energy in a proton gradient. This subunit may bind ubiquinone. The chain is NADH-quinone oxidoreductase subunit H from Buchnera aphidicola subsp. Schizaphis graminum (strain Sg).